Reading from the N-terminus, the 129-residue chain is Small ribosomal subunit protein uS11 (129 aa).

Belongs to the universal ribosomal protein uS11 family. In terms of assembly, part of the 30S ribosomal subunit. Interacts with proteins S7 and S18. Binds to IF-3.

Located on the platform of the 30S subunit, it bridges several disparate RNA helices of the 16S rRNA. Forms part of the Shine-Dalgarno cleft in the 70S ribosome. In Nitrosomonas europaea (strain ATCC 19718 / CIP 103999 / KCTC 2705 / NBRC 14298), this protein is Small ribosomal subunit protein uS11.